The primary structure comprises 237 residues: Lectin alpha chain (237 aa).

Residues Glu-8 and Asp-10 each contribute to the Mn(2+) site. Residues Asp-10, Tyr-12, Asn-14, and Asp-19 each contribute to the Ca(2+) site. Tyr-12 contributes to the a carbohydrate binding site. 3 residues coordinate Mn(2+): Asp-19, His-24, and Ser-34. A carbohydrate is bound at residue 99 to 100 (LY). Position 208 (Asp-208) interacts with Ca(2+). An a carbohydrate-binding site is contributed by Arg-228.

Belongs to the leguminous lectin family. Homotetramer. The beta and gamma chains are produced by partial proteolytic processing of the lectin alpha chain by an asparaginyl endopeptidase. Mixture of 60% alpha lectin and 40% of its beta and gamma proteolytic fragments.

Its function is as follows. D-mannose/D-glucose-binding lectin. Has anti-inflammatory activity in rats. Induces histamine release in mast cells from rat. Induces lymphocyte proliferation and IFNG production. Shows toxicity against the aquatic snail B.glabrata at concentrations higher than 50 ug/ml. This is Lectin alpha chain from Dioclea grandiflora (Mucana).